A 352-amino-acid polypeptide reads, in one-letter code: B1 bradykinin receptor (352 aa).

Residues 1-41 (MASWPPLELQSSNQSQLFPQNATACDNAPEAWDLLHRVLPT) lie on the Extracellular side of the membrane. Residues Asn-13 and Asn-21 are each glycosylated (N-linked (GlcNAc...) asparagine). The chain crosses the membrane as a helical span at residues 42-62 (FIISICSFGLLGNLFVLLVFL). Residues 63 to 72 (LPRRRLNVAE) are Cytoplasmic-facing. Residues 73-93 (IYLANLAASDLVFVLGLPFWA) traverse the membrane as a helical segment. Residues 94-110 (ENIWNQFNWPFGALLCR) lie on the Extracellular side of the membrane. Residues Cys-109 and Cys-188 are joined by a disulfide bond. A helical transmembrane segment spans residues 111 to 131 (VINGIIKANLFISIFLVVAIS). Over 132–153 (QDRYCVLVHPMASRRRQRRRQA) the chain is Cytoplasmic. A helical membrane pass occupies residues 154–174 (RVTCVLIWVVGGLLSIPTFLL). The Extracellular portion of the chain corresponds to 175–206 (RSIQAVPDLNITACILLLPHEAWHFARIVELN). A glycan (N-linked (GlcNAc...) asparagine) is linked at Asn-184. The helical transmembrane segment at 207-227 (ILAFLLPLAAIIFFNYHILAS) threads the bilayer. Topologically, residues 228-250 (LRGREEVSRTRCGGSKDSKTTAL) are cytoplasmic. Residues 251–271 (ILTLVVAFLVCWAPYHFFAFL) form a helical membrane-spanning segment. Residues 272–294 (EFLFQVQAVRGCFWEDFIDLGLQ) are Extracellular-facing. Residues 295 to 315 (LANFLAFTNSSLNPVIYVFVG) form a helical membrane-spanning segment. Residues 316 to 352 (RLFRTKVWELYKQCTPKSLAPISSSHRKEIFQLFWRN) lie on the Cytoplasmic side of the membrane. Residue Cys-329 is the site of S-palmitoyl cysteine attachment.

Belongs to the G-protein coupled receptor 1 family. Bradykinin receptor subfamily. BDKRB1 sub-subfamily.

The protein resides in the cell membrane. Functionally, this is a receptor for bradykinin. Could be a factor in chronic pain and inflammation. The polypeptide is B1 bradykinin receptor (BDKRB1) (Macaca mulatta (Rhesus macaque)).